A 475-amino-acid polypeptide reads, in one-letter code: Glutamate--tRNA ligase 2 (475 aa).

The short motif at 9–19 (PSPTGFLHIGS) is the 'HIGH' region element. A 'KMSKS' region motif is present at residues 238-242 (KLSKR). Lys241 serves as a coordination point for ATP.

The protein belongs to the class-I aminoacyl-tRNA synthetase family. Glutamate--tRNA ligase type 1 subfamily. In terms of assembly, monomer.

The protein resides in the cytoplasm. The catalysed reaction is tRNA(Glu) + L-glutamate + ATP = L-glutamyl-tRNA(Glu) + AMP + diphosphate. Its function is as follows. Catalyzes the attachment of glutamate to tRNA(Glu) in a two-step reaction: glutamate is first activated by ATP to form Glu-AMP and then transferred to the acceptor end of tRNA(Glu). In Bartonella quintana (strain Toulouse) (Rochalimaea quintana), this protein is Glutamate--tRNA ligase 2.